Consider the following 171-residue polypeptide: ATP synthase subunit b (171 aa).

Residues 10–30 (GLYYGDSIFYAVCFLLLMWII) form a helical membrane-spanning segment.

It belongs to the ATPase B chain family. In terms of assembly, F-type ATPases have 2 components, F(1) - the catalytic core - and F(0) - the membrane proton channel. F(1) has five subunits: alpha(3), beta(3), gamma(1), delta(1), epsilon(1). F(0) has three main subunits: a(1), b(2) and c(10-14). The alpha and beta chains form an alternating ring which encloses part of the gamma chain. F(1) is attached to F(0) by a central stalk formed by the gamma and epsilon chains, while a peripheral stalk is formed by the delta and b chains.

It localises to the cell membrane. Its function is as follows. F(1)F(0) ATP synthase produces ATP from ADP in the presence of a proton or sodium gradient. F-type ATPases consist of two structural domains, F(1) containing the extramembraneous catalytic core and F(0) containing the membrane proton channel, linked together by a central stalk and a peripheral stalk. During catalysis, ATP synthesis in the catalytic domain of F(1) is coupled via a rotary mechanism of the central stalk subunits to proton translocation. Component of the F(0) channel, it forms part of the peripheral stalk, linking F(1) to F(0). The protein is ATP synthase subunit b of Levilactobacillus brevis (strain ATCC 367 / BCRC 12310 / CIP 105137 / JCM 1170 / LMG 11437 / NCIMB 947 / NCTC 947) (Lactobacillus brevis).